The chain runs to 277 residues: Undecaprenyl-diphosphatase (277 aa).

Helical transmembrane passes span 47 to 67 (FNIIIQLAAILAVVWEFRGKI), 85 to 105 (VNLLIAFFPAVILGVLFADLI), 108 to 128 (WLFNPITVALALVVGGVIMLW), 183 to 203 (AATEFSFFLAMPTMVGAAVYS), 218 to 238 (VFAVGFVTSFVFAMVAVRALL), and 249 to 269 (FAWYRIAFGLLILATWQFHLI).

It belongs to the UppP family.

It localises to the cell inner membrane. The enzyme catalyses di-trans,octa-cis-undecaprenyl diphosphate + H2O = di-trans,octa-cis-undecaprenyl phosphate + phosphate + H(+). Its function is as follows. Catalyzes the dephosphorylation of undecaprenyl diphosphate (UPP). Confers resistance to bacitracin. This is Undecaprenyl-diphosphatase from Pseudomonas paraeruginosa (strain DSM 24068 / PA7) (Pseudomonas aeruginosa (strain PA7)).